The primary structure comprises 295 residues: 4-diphosphocytidyl-2-C-methyl-D-erythritol kinase (295 aa).

K15 is a catalytic residue. P101–S111 contributes to the ATP binding site. Residue D143 is part of the active site.

It belongs to the GHMP kinase family. IspE subfamily.

It carries out the reaction 4-CDP-2-C-methyl-D-erythritol + ATP = 4-CDP-2-C-methyl-D-erythritol 2-phosphate + ADP + H(+). It functions in the pathway isoprenoid biosynthesis; isopentenyl diphosphate biosynthesis via DXP pathway; isopentenyl diphosphate from 1-deoxy-D-xylulose 5-phosphate: step 3/6. Its function is as follows. Catalyzes the phosphorylation of the position 2 hydroxy group of 4-diphosphocytidyl-2C-methyl-D-erythritol. The polypeptide is 4-diphosphocytidyl-2-C-methyl-D-erythritol kinase (Caulobacter vibrioides (strain ATCC 19089 / CIP 103742 / CB 15) (Caulobacter crescentus)).